The following is a 375-amino-acid chain: DNA replication and repair protein RecF (375 aa).

Position 30–37 (30–37 (GENAQGKT)) interacts with ATP.

It belongs to the RecF family.

It is found in the cytoplasm. The RecF protein is involved in DNA metabolism; it is required for DNA replication and normal SOS inducibility. RecF binds preferentially to single-stranded, linear DNA. It also seems to bind ATP. The polypeptide is DNA replication and repair protein RecF (Enterococcus faecalis (strain ATCC 700802 / V583)).